The chain runs to 555 residues: MPSISPFAGKPVDPDRLVNIDALLDAYYTRKPDPAIATQRVAFGTSGHRGSSLTTSFNENHILSISQAIADYRKGAGITGPLFIGIDTHALSRPALKSALEVFAANGVEVRIDAQDGYTPTPVISHAILTYNRDRSSDLADGVVITPSHNPPEDGGYKYNPPHGGPADTDITKVVETAANDYMAKKMEGVKRVSFEDALKAPTTKRHDYITPYVDDLAAVVDMDVIRESGVSIGIDPLGGAAVDYWQPIIDKYGINATIVSKEVDPTFRFMTADWDGQIRMDCSSPYAMARLVGMKDKFDIAFANDTDADRHGIVSGKYGLMNPNHYLAVAIEYLFNNRENWNASAGVGKTVVSSSMIDRVAKEIGRKLVEVPVGFKWFVDGLYNGTLGFGGEESAGASFLRRAGTVWSTDKDGIILGLLAAEITARTKRTPGAAYEDMTRRLGTPYYARIDAPADPEQKAILKNLSPEQIGMTELAGEPILSTLTNAPGNGAAIGGLKVSAKDGWFAARPSGTENVYKIYAESFKSAAHLKAIQTEAQDAISALFAKAAQKNAG.

Substrate is bound by residues Thr45, Arg49, 148 to 149 (SH), and Lys158. Ser148 acts as the Phosphoserine intermediate in catalysis. Ser148 contacts Mg(2+). Residues Asp306, Asp308, and Asp310 each contribute to the Mg(2+) site. Residues 310 to 311 (DR) and 393 to 395 (EES) contribute to the substrate site.

This sequence belongs to the phosphohexose mutase family. Mg(2+) serves as cofactor.

It catalyses the reaction alpha-D-glucose 1-phosphate = alpha-D-glucose 6-phosphate. Its function is as follows. This enzyme participates in both the breakdown and synthesis of glucose. This Komagataeibacter xylinus (Gluconacetobacter xylinus) protein is Phosphoglucomutase (celB).